The sequence spans 439 residues: Lipoyl synthase, mitochondrial (439 aa).

The transit peptide at 1 to 37 directs the protein to the mitochondrion; it reads MVASARGLRTLHSAHSSISALPASTVPRLQLAVSRCY. Cysteine 150, cysteine 155, cysteine 161, cysteine 181, cysteine 185, cysteine 188, and serine 396 together coordinate [4Fe-4S] cluster. The Radical SAM core domain maps to 164 to 385; the sequence is GSSKSAATAT…KERALEMGFL (222 aa).

It belongs to the radical SAM superfamily. Lipoyl synthase family. Requires [4Fe-4S] cluster as cofactor.

It is found in the mitochondrion. The enzyme catalyses [[Fe-S] cluster scaffold protein carrying a second [4Fe-4S](2+) cluster] + N(6)-octanoyl-L-lysyl-[protein] + 2 oxidized [2Fe-2S]-[ferredoxin] + 2 S-adenosyl-L-methionine + 4 H(+) = [[Fe-S] cluster scaffold protein] + N(6)-[(R)-dihydrolipoyl]-L-lysyl-[protein] + 4 Fe(3+) + 2 hydrogen sulfide + 2 5'-deoxyadenosine + 2 L-methionine + 2 reduced [2Fe-2S]-[ferredoxin]. Its pathway is protein modification; protein lipoylation via endogenous pathway; protein N(6)-(lipoyl)lysine from octanoyl-[acyl-carrier-protein]: step 2/2. In terms of biological role, catalyzes the radical-mediated insertion of two sulfur atoms into the C-6 and C-8 positions of the octanoyl moiety bound to the lipoyl domains of lipoate-dependent enzymes, thereby converting the octanoylated domains into lipoylated derivatives. This is Lipoyl synthase, mitochondrial from Paracoccidioides lutzii (strain ATCC MYA-826 / Pb01) (Paracoccidioides brasiliensis).